A 136-amino-acid polypeptide reads, in one-letter code: Large ribosomal subunit protein bL17 (136 aa).

This sequence belongs to the bacterial ribosomal protein bL17 family. Part of the 50S ribosomal subunit. Contacts protein L32.

The sequence is that of Large ribosomal subunit protein bL17 from Akkermansia muciniphila (strain ATCC BAA-835 / DSM 22959 / JCM 33894 / BCRC 81048 / CCUG 64013 / CIP 107961 / Muc).